The primary structure comprises 197 residues: Guanylate kinase (197 aa).

A Guanylate kinase-like domain is found at 6-191; the sequence is SKLIILSGPS…CVAQIEKIIS (186 aa). ATP is bound at residue 13-20; the sequence is GPSGVGKG.

Belongs to the guanylate kinase family.

The protein localises to the cytoplasm. It catalyses the reaction GMP + ATP = GDP + ADP. Functionally, essential for recycling GMP and indirectly, cGMP. This is Guanylate kinase from Mesomycoplasma hyopneumoniae (strain 232) (Mycoplasma hyopneumoniae).